We begin with the raw amino-acid sequence, 2201 residues long: Voltage-dependent T-type calcium channel subunit alpha-1I (2201 aa).

Residues 1–45 form a disordered region; that stretch reads MADSNLPPSSAAAPAPEPGITEQPGPRSPPPSPPGLEEPLEGTNP. The Cytoplasmic segment spans residues 1 to 76; sequence MADSNLPPSS…RNWCIKMVCN (76 aa). Over residues 26–36 the composition is skewed to pro residues; it reads PRSPPPSPPGL. The stretch at 64-399 is one I repeat; sequence TSPRNWCIKM…LCLVVIATQF (336 aa). Residues 77–97 traverse the membrane as a helical segment; the sequence is PWFECVSMLVILLNCVTLGMY. The Extracellular segment spans residues 98-115; it reads QPCDDMECLSDRCKILQV. The chain crosses the membrane as a helical span at residues 116–137; it reads FDDFIFIFFAMEMVLKMVALGI. The Cytoplasmic segment spans residues 138 to 146; that stretch reads FGKKCYLGD. Residues 147-166 traverse the membrane as a helical segment; it reads TWNRLDFFIVMAGMVEYSLD. The Extracellular segment spans residues 167-171; it reads LQNIN. An N-linked (GlcNAc...) asparagine glycan is attached at Asn-171. A helical transmembrane segment spans residues 172 to 189; sequence LSAIRTVRVLRPLKAINR. Topologically, residues 190-209 are cytoplasmic; that stretch reads VPSMRILVNLLLDTLPMLGN. A helical transmembrane segment spans residues 210 to 230; it reads VLLLCFFVFFIFGIIGVQLWA. The Extracellular portion of the chain corresponds to 231-371; it reads GLLRNRCFLE…YYVMDAHSFY (141 aa). N-linked (GlcNAc...) asparagine glycans are attached at residues Asn-242 and Asn-309. The helical transmembrane segment at 372–396 threads the bilayer; it reads NFIYFILLIIVGSFFMINLCLVVIA. Over 397–598 the chain is Cytoplasmic; it reads TQFSETKQRE…EKLRGIVDSK (202 aa). 2 disordered regions span residues 463-500 and 513-579; these read QAMGPGTPAPAKPGPHAKEPSHCKLCPRHSPLDPTPHT and PSSC…AARL. Low complexity predominate over residues 545-554; the sequence is SAEAEANGDG. One copy of the II repeat lies at 584–823; the sequence is WRETREKLRG…LLVAILVEGF (240 aa). Residues 599–619 traverse the membrane as a helical segment; sequence YFNRGIMMAILVNTVSMGIEH. The Extracellular portion of the chain corresponds to 620–632; sequence HEQPEELTNILEI. A helical membrane pass occupies residues 633–654; sequence CNVVFTSMFALEMILKLAAFGL. The Cytoplasmic segment spans residues 655–660; that stretch reads FDYLRN. The chain crosses the membrane as a helical span at residues 661 to 679; it reads PYNIFDSIIVIISIWEIVG. The Extracellular segment spans residues 680–687; sequence QADGGLSV. A helical membrane pass occupies residues 688-711; the sequence is LRTFRLLRVLKLVRFMPALRRQLV. Topologically, residues 712 to 722 are cytoplasmic; it reads VLMKTMDNVAT. A helical transmembrane segment spans residues 723–743; the sequence is FCMLLMLFIFIFSILGMHIFG. The Extracellular portion of the chain corresponds to 744–795; it reads CKFSLRTDTGDTVPDRKNFDSLLWAIVTVFQILTQEDWNVVLYNGMASTTPW. The helical transmembrane segment at 796 to 820 threads the bilayer; the sequence is ASLYFVALMTFGNYVLFNLLVAILV. The Cytoplasmic portion of the chain corresponds to 821-1125; that stretch reads EGFQAEGDAN…NKFRILCQTI (305 aa). Residues 936–969 are disordered; that stretch reads WGRSGTWASRRSSWNSLKHKPPSAEHESLLSGEG. Residues 941 to 951 are compositionally biased toward polar residues; it reads TWASRRSSWNS. Residue Ser-1017 is modified to Phosphoserine. One copy of the III repeat lies at 1116–1393; the sequence is NKFRILCQTI…MFVGVVVENF (278 aa). Residues 1126–1148 form a helical membrane-spanning segment; the sequence is IAHKLFDYVVLAFIFLNCITIAL. Topologically, residues 1149–1166 are extracellular; that stretch reads ERPQIEAGSTERIFLTVS. The chain crosses the membrane as a helical span at residues 1167–1187; it reads NYIFTAIFVGEMTLKVVSLGL. The Cytoplasmic segment spans residues 1188–1197; it reads YFGEQAYLRS. A helical transmembrane segment spans residues 1198-1217; sequence SWNVLDGFLVFVSIIDIVVS. The Extracellular portion of the chain corresponds to 1218 to 1231; sequence VASAGGAKILGVLR. A helical membrane pass occupies residues 1232-1253; that stretch reads VLRLLRTLRPLRVISRAPGLKL. Over 1254–1263 the chain is Cytoplasmic; the sequence is VVETLISSLK. The helical transmembrane segment at 1264-1287 threads the bilayer; that stretch reads PIGNIVLICCAFFIIFGILGVQLF. Residues 1288–1364 are Extracellular-facing; it reads KGKFYHCLGV…DQQPVTNHNP (77 aa). N-linked (GlcNAc...) asparagine glycans are attached at residues Asn-1301 and Asn-1304. The helical transmembrane segment at 1365-1390 threads the bilayer; the sequence is WMLLYFISFLLIVSFFVLNMFVGVVV. At 1391-1445 the chain is on the cytoplasmic side; that stretch reads ENFHKCRQHQEAEEARRREEKRLRRLEKKRRKAQRLPYYATYCPTRLLIHSMCTS. One copy of the IV repeat lies at 1431 to 1692; it reads TYCPTRLLIH…VVVAVLMKHL (262 aa). A helical membrane pass occupies residues 1446–1466; it reads HYLDIFITFIICLNVVTMSLE. The Extracellular portion of the chain corresponds to 1467–1480; sequence HYNQPTSLETALKY. Residues 1481-1502 traverse the membrane as a helical segment; sequence CNYMFTTVFVLEAVLKLVAFGL. Residues 1503 to 1509 lie on the Cytoplasmic side of the membrane; it reads RRFFKDR. A helical membrane pass occupies residues 1510–1528; it reads WNQLDLAIVLLSVMGITLE. The Extracellular segment spans residues 1529–1542; that stretch reads EIEINAALPINPTI. A helical membrane pass occupies residues 1543–1566; the sequence is IRIMRVLRIARVLKLLKMATGMRA. The Cytoplasmic segment spans residues 1567–1580; it reads LLDTVVQALPQVGN. The helical transmembrane segment at 1581–1601 threads the bilayer; that stretch reads LGLLFMLLFFIYAALGVELFG. Residues 1602–1664 lie on the Extracellular side of the membrane; sequence KLVCNDENPC…RSCLSSLQFV (63 aa). The chain crosses the membrane as a helical span at residues 1665 to 1692; it reads SPLYFVSFVLTAQFVLINVVVAVLMKHL. Over 1693-1835 the chain is Cytoplasmic; sequence DDSNKEAQED…EVQLAETEAF (143 aa). Disordered regions lie at residues 1846 to 1876, 1916 to 1938, 1992 to 2045, 2057 to 2105, and 2126 to 2201; these read LLGDDLSLEDPTACPPGRKDSKGELDPPEPM, LKHDSSQAPPSPFSPDGSSPLLQ, SDTS…TRRR, RGLR…HSET, and LTPA…KRKR. Residues 1992–2007 are compositionally biased toward low complexity; that stretch reads SDTSLDASPSSSAGSL. Polar residues-rich tracts occupy residues 2008–2019 and 2066–2075; these read QTTLEDSLTLSD and HSSGGSTSPG. The span at 2077–2090 shows a compositional bias: basic and acidic residues; it reads THHDSMDPSDEEGR.

The protein belongs to the calcium channel alpha-1 subunit (TC 1.A.1.11) family. CACNA1I subfamily. As to quaternary structure, interacts with CATSPER1 and CATSPER2, leading to suppress T-type calcium channel activity. In response to raising of intracellular calcium, the T-type channels are activated by CaM-kinase II. In terms of tissue distribution, brain.

Its subcellular location is the membrane. The catalysed reaction is Ca(2+)(in) = Ca(2+)(out). Its function is as follows. Voltage-sensitive calcium channels (VSCC) mediate the entry of calcium ions into excitable cells and are also involved in a variety of calcium-dependent processes, including muscle contraction, hormone or neurotransmitter release, gene expression, cell motility, cell division and cell death. This channel gives rise to T-type calcium currents. T-type calcium channels belong to the 'low-voltage activated (LVA)' group and are strongly blocked by nickel and mibefradil. A particularity of this type of channels is an opening at quite negative potentials, and a voltage-dependent inactivation. T-type channels serve pacemaking functions in both central neurons and cardiac nodal cells and support calcium signaling in secretory cells and vascular smooth muscle. They may also be involved in the modulation of firing patterns of neurons which is important for information processing as well as in cell growth processes. Gates in voltage ranges similar to, but higher than alpha 1G or alpha 1H. In terms of biological role, voltage-sensitive calcium channels (VSCC) mediate the entry of calcium ions into excitable cells and are also involved in a variety of calcium-dependent processes, including muscle contraction, hormone or neurotransmitter release, gene expression, cell motility, cell division and cell death. This channel gives rise to T-type calcium currents. This is Voltage-dependent T-type calcium channel subunit alpha-1I (Cacna1i) from Rattus norvegicus (Rat).